Consider the following 296-residue polypeptide: 2-methylisocitrate lyase (296 aa).

45–47 (SGG) contributes to the substrate binding site. The Mg(2+) site is built by D85 and D87. Substrate is bound by residues 123 to 124 (CG), R158, E188, 210 to 212 (NIT), R241, and R270.

This sequence belongs to the isocitrate lyase/PEP mutase superfamily. Methylisocitrate lyase family. As to quaternary structure, homotetramer; dimer of dimers. Mg(2+) serves as cofactor.

It carries out the reaction (2S,3R)-3-hydroxybutane-1,2,3-tricarboxylate = pyruvate + succinate. The protein operates within organic acid metabolism; propanoate degradation. Its function is as follows. Involved in the catabolism of short chain fatty acids (SCFA) via the 2-methylcitrate cycle I (propionate degradation route). Catalyzes the thermodynamically favored C-C bond cleavage of (2R,3S)-2-methylisocitrate to yield pyruvate and succinate via an alpha-carboxy-carbanion intermediate. The sequence is that of 2-methylisocitrate lyase from Escherichia coli (strain K12).